Reading from the N-terminus, the 365-residue chain is Phospho-N-acetylmuramoyl-pentapeptide-transferase (365 aa).

10 helical membrane-spanning segments follow: residues 29–49 (VGGL…IIVW), 73–93 (GTPT…VIIW), 97–117 (SNIY…LGLV), 133–153 (ILNK…IMFI), 171–191 (IVCK…VGTS), 202–222 (GLVI…TWVV), 242–262 (LVVV…FNSY), 266–286 (IFMG…VSIL), 291–311 (YLLL…IFQV), and 341–361 (IVVR…VIFI).

It belongs to the glycosyltransferase 4 family. MraY subfamily. Requires Mg(2+) as cofactor.

The protein localises to the cell inner membrane. It carries out the reaction UDP-N-acetyl-alpha-D-muramoyl-L-alanyl-gamma-D-glutamyl-meso-2,6-diaminopimeloyl-D-alanyl-D-alanine + di-trans,octa-cis-undecaprenyl phosphate = di-trans,octa-cis-undecaprenyl diphospho-N-acetyl-alpha-D-muramoyl-L-alanyl-D-glutamyl-meso-2,6-diaminopimeloyl-D-alanyl-D-alanine + UMP. It functions in the pathway cell wall biogenesis; peptidoglycan biosynthesis. Its function is as follows. Catalyzes the initial step of the lipid cycle reactions in the biosynthesis of the cell wall peptidoglycan: transfers peptidoglycan precursor phospho-MurNAc-pentapeptide from UDP-MurNAc-pentapeptide onto the lipid carrier undecaprenyl phosphate, yielding undecaprenyl-pyrophosphoryl-MurNAc-pentapeptide, known as lipid I. The chain is Phospho-N-acetylmuramoyl-pentapeptide-transferase from Blochmanniella floridana.